A 59-amino-acid chain; its full sequence is UPF0181 protein YoaH (59 aa).

It belongs to the UPF0181 family.

The sequence is that of UPF0181 protein YoaH from Shigella sonnei (strain Ss046).